A 310-amino-acid chain; its full sequence is MRLVFAGTPEVAVPSLDALLASEHEVVAVVTRPDAAAGRGRRLVASPVARRAAEAGIEVLKPARADDPAFLDRLRELAPDCCPVVAYGALLRQEALDIPRYGWVNLHFSLLPAWRGAAPVQHAILHGDDITGATTFQIERELDAGPVYGTVTEPIGPRDTSGDLLERLAKSGAELLVRTIDGIAKNELVPRPQGSEGVSYAPKLTPDDARVDFTAPALRVDRLIRACTPAPGAWTRFRGTRIKLGPVEPLPDAAPLPPGQLVATSRDVLVGTATHPVRLGEVQPQGKKAMPAADWARGARIGDGERFGDD.

109 to 112 (SLLP) contributes to the (6S)-5,6,7,8-tetrahydrofolate binding site. The tract at residues 283 to 310 (QPQGKKAMPAADWARGARIGDGERFGDD) is disordered. Residues 300 to 310 (RIGDGERFGDD) show a composition bias toward basic and acidic residues.

This sequence belongs to the Fmt family.

The catalysed reaction is L-methionyl-tRNA(fMet) + (6R)-10-formyltetrahydrofolate = N-formyl-L-methionyl-tRNA(fMet) + (6S)-5,6,7,8-tetrahydrofolate + H(+). In terms of biological role, attaches a formyl group to the free amino group of methionyl-tRNA(fMet). The formyl group appears to play a dual role in the initiator identity of N-formylmethionyl-tRNA by promoting its recognition by IF2 and preventing the misappropriation of this tRNA by the elongation apparatus. The sequence is that of Methionyl-tRNA formyltransferase from Thermobifida fusca (strain YX).